The chain runs to 111 residues: Nucleoid-associated protein LBA0378 (111 aa).

The protein belongs to the YbaB/EbfC family. In terms of assembly, homodimer.

It is found in the cytoplasm. Its subcellular location is the nucleoid. Functionally, binds to DNA and alters its conformation. May be involved in regulation of gene expression, nucleoid organization and DNA protection. This Lactobacillus acidophilus (strain ATCC 700396 / NCK56 / N2 / NCFM) protein is Nucleoid-associated protein LBA0378.